We begin with the raw amino-acid sequence, 37 residues long: Cytochrome b6-f complex subunit 5 (37 aa).

Residues 5–25 form a helical membrane-spanning segment; sequence LLSGIVLGLIPITLAGLFVTA.

It belongs to the PetG family. The 4 large subunits of the cytochrome b6-f complex are cytochrome b6, subunit IV (17 kDa polypeptide, PetD), cytochrome f and the Rieske protein, while the 4 small subunits are PetG, PetL, PetM and PetN. The complex functions as a dimer.

Its subcellular location is the plastid. The protein resides in the chloroplast thylakoid membrane. In terms of biological role, component of the cytochrome b6-f complex, which mediates electron transfer between photosystem II (PSII) and photosystem I (PSI), cyclic electron flow around PSI, and state transitions. PetG is required for either the stability or assembly of the cytochrome b6-f complex. The protein is Cytochrome b6-f complex subunit 5 of Zygnema circumcarinatum (Green alga).